The following is a 339-amino-acid chain: MAASALYACTKCTQRYPFEELSQGQQLCKECRIAHPIVKCTYCRSEFQQESKTNTICKKCAQNVKQFGTPKPCQYCNIIAAFIGTKCQRCTNSEKKYGAPQTCEQCKQQCAFDRKEEGRRKVDGKLLCWLCTLSYKRVLQKTKEQRKSLGSSHSNSSSSSLTEKDQHHSKHHHHHHHHHHRHSSGHHKVSSLSPEQEQGLWKQSHKSSAAIQNETPKKKPKLESKPSNGDSSSINQSADSGGTDNFVLISQLKEEVMSLKRLLQQRDQTILEKDKKLTELKADFQYQESNLRTKMNSMEKAHKETVEQLQAKNRELLKQVAALSKGKKFDKSGSVLTSP.

Alanine 2 carries the N-acetylalanine modification. Serine 22 and serine 148 each carry phosphoserine. The segment at 144–243 (EQRKSLGSSH…INQSADSGGT (100 aa)) is disordered. Positions 148–160 (SLGSSHSNSSSSS) are enriched in low complexity. The segment covering 167-189 (HHSKHHHHHHHHHHRHSSGHHKV) has biased composition (basic residues). Phosphoserine is present on serine 193. The residue at position 215 (threonine 215) is a Phosphothreonine. A compositionally biased stretch (basic and acidic residues) spans 215-224 (TPKKKPKLES). Polar residues predominate over residues 228-243 (NGDSSSINQSADSGGT). Positions 248–328 (LISQLKEEVM…QVAALSKGKK (81 aa)) form a coiled coil.

This sequence belongs to the FAM76 family. In terms of assembly, interacts with HNRNPA2B1 (via C-terminus); the interaction results in retention of HNRNPA2B1 in the nucleus and inhibition of the NF-kappa-B-mediated inflammatory pathway.

Its subcellular location is the nucleus speckle. In terms of biological role, negatively regulates the NF-kappa-B-mediated inflammatory pathway by preventing the translocation of HNRNPA2B1 from the nucleus to the cytoplasm. Inhibits the PI3K/Akt/NF-kappa-B pathway-mediated polarization of M1 macrophages by binding to and stabilizing PIK3CD mRNA, resulting in increased levels of PIK3CD protein and increased levels of phosphorylated downstream target AKT which leads to decreased NF-kappa-B signaling. The polypeptide is Protein FAM76B (Fam76b) (Mus musculus (Mouse)).